The chain runs to 205 residues: Guanylate kinase (205 aa).

The 179-residue stretch at P19–I197 folds into the Guanylate kinase-like domain. ATP is bound at residue A26–T33.

The protein belongs to the guanylate kinase family.

It localises to the cytoplasm. It carries out the reaction GMP + ATP = GDP + ADP. Functionally, essential for recycling GMP and indirectly, cGMP. This Chlamydia pneumoniae (Chlamydophila pneumoniae) protein is Guanylate kinase (gmk).